Here is a 130-residue protein sequence, read N- to C-terminus: MAKAPKANTPKVTSTSSAVLTDFQETFKTSKRAYFAQIEKYPKLKLIDTFCFFLVLLGVIQCTFIILIRDNFPFNAFLAGFIICVGQFVLLMSLRLQLCNSFPGISKNRAFAEFIVASLILHFVCLHFIN.

Over 2–45 (AKAPKANTPKVTSTSSAVLTDFQETFKTSKRAYFAQIEKYPKLK) the chain is Cytoplasmic. Residues 46–66 (LIDTFCFFLVLLGVIQCTFII) traverse the membrane as a helical segment. Residues 67–71 (LIRDN) are Lumenal-facing. The chain crosses the membrane as a helical span at residues 72–92 (FPFNAFLAGFIICVGQFVLLM). Residues 93–109 (SLRLQLCNSFPGISKNR) are Cytoplasmic-facing. A helical membrane pass occupies residues 110-130 (AFAEFIVASLILHFVCLHFIN).

Belongs to the DAD/OST2 family. In terms of assembly, component of the oligosaccharyltransferase (OST) complex, which appears to exist in two assemblies comprising OST1, OST2, OST4, OST5, STT3, SWP1, WPB1, and either OST3 or OST6. OST assembly occurs through the formation of 3 subcomplexes. Subcomplex 1 contains OST1 and OST5, subcomplex 2 contains STT3, OST3, and OST4, and subcomplex 3 contains OST2, WBP1, and SWP1. Interacts with SEC61 and SSS1.

Its subcellular location is the endoplasmic reticulum membrane. Its pathway is protein modification; protein glycosylation. In terms of biological role, subunit of the oligosaccharyl transferase (OST) complex that catalyzes the initial transfer of a defined glycan (Glc(3)Man(9)GlcNAc(2) in eukaryotes) from the lipid carrier dolichol-pyrophosphate to an asparagine residue within an Asn-X-Ser/Thr consensus motif in nascent polypeptide chains, the first step in protein N-glycosylation. N-glycosylation occurs cotranslationally and the complex associates with the Sec61 complex at the channel-forming translocon complex that mediates protein translocation across the endoplasmic reticulum (ER). All subunits are required for a maximal enzyme activity. In Saccharomyces cerevisiae (strain ATCC 204508 / S288c) (Baker's yeast), this protein is Dolichyl-diphosphooligosaccharide--protein glycosyltransferase subunit OST2 (OST2).